Consider the following 84-residue polypeptide: CDC42 small effector protein 2 (84 aa).

S-palmitoyl cysteine attachment occurs at residues cysteine 10 and cysteine 11. A CRIB domain is found at 29 to 42 (IGEPTNFVHTAHVG). Serine 43 and serine 52 each carry phosphoserine.

This sequence belongs to the CDC42SE/SPEC family. Interacts with CDC42 (in GTP-bound form). Interacts weakly with RAC1 and not at all with RHOA.

The protein resides in the cytoplasm. The protein localises to the cytoskeleton. Its subcellular location is the cell membrane. It is found in the cell projection. It localises to the phagocytic cup. In terms of biological role, probably involved in the organization of the actin cytoskeleton by acting downstream of CDC42, inducing actin filament assembly. Alters CDC42-induced cell shape changes. In activated T-cells, may play a role in CDC42-mediated F-actin accumulation at the immunological synapse. May play a role in early contractile events in phagocytosis in macrophages. The sequence is that of CDC42 small effector protein 2 (CDC42SE2) from Bos taurus (Bovine).